Here is a 493-residue protein sequence, read N- to C-terminus: MEKKLKSWQGWLLFCGAMAVVFVLGLVVSSLMERRAETVSVFNNKRVEITGIEARNEVFGENYPRQYETWKETAKTDFKSEFNGNEAVDVLEQRPEMVVLWAGYAFSKDYSTPRGHMHAIEDITHSLRTGAPMDDKSGPQPSTCWTCKSPDVPRMMEAIGVDSFYNNKWGAFGSEIVNPIGCADCHEPTNMKLHISRPALREAFARQGKDIDKATPQEMRSLVCAQCHVEYYFKGDGKYLTFPWDKGFSVEDMEAYYDEADFADYTHALSKARILKAQHPDYEISQMGIHAQRGVSCADCHMPYKSEGGMKFSDHHIQSPLAMIDRTCQVCHRESEETLRNNVYDRQRKANEIRGRLEQELAKAHIEAEFAWDKGATDVQMAEALKLIRQAQWRWDFGVASHGGAFHAPQEIQRILGHGLDKALQARLAISKVLAQHGYTADVPMPDISTKEKAQEYIGLDMEKERKAKGKFLKTIVPEWLEKARANGRLAKL.

The N-terminal stretch at 1 to 25 (MEKKLKSWQGWLLFCGAMAVVFVLG) is a signal peptide. His116 provides a ligand contact to heme c. 3 residues coordinate heme: Cys144, Cys147, and Lys148. Residues Cys182, Cys185, His186, Cys224, Cys227, and His228 each coordinate heme c. Ca(2+) contacts are provided by Glu230, Tyr231, Lys276, and Gln278. Tyr231 is a binding site for substrate. Substrate is bound at residue His279. Heme c contacts are provided by His290, Cys297, Cys300, His301, His315, Cys328, Cys331, His332, and His407.

The protein belongs to the cytochrome c-552 family. Ca(2+) is required as a cofactor. It depends on heme c as a cofactor.

It is found in the periplasm. The catalysed reaction is 6 Fe(III)-[cytochrome c] + NH4(+) + 2 H2O = 6 Fe(II)-[cytochrome c] + nitrite + 8 H(+). The protein operates within nitrogen metabolism; nitrate reduction (assimilation). In terms of biological role, catalyzes the reduction of nitrite to ammonia, consuming six electrons in the process. In Bacteroides fragilis (strain YCH46), this protein is Cytochrome c-552.